Reading from the N-terminus, the 383-residue chain is ATP phosphoribosyltransferase regulatory subunit (383 aa).

This sequence belongs to the class-II aminoacyl-tRNA synthetase family. HisZ subfamily. In terms of assembly, heteromultimer composed of HisG and HisZ subunits.

Its subcellular location is the cytoplasm. Its pathway is amino-acid biosynthesis; L-histidine biosynthesis; L-histidine from 5-phospho-alpha-D-ribose 1-diphosphate: step 1/9. Its function is as follows. Required for the first step of histidine biosynthesis. May allow the feedback regulation of ATP phosphoribosyltransferase activity by histidine. The sequence is that of ATP phosphoribosyltransferase regulatory subunit from Cupriavidus pinatubonensis (strain JMP 134 / LMG 1197) (Cupriavidus necator (strain JMP 134)).